The chain runs to 213 residues: UPF0319 protein HAPS_0727 (213 aa).

The first 21 residues, Met1 to Ala21, serve as a signal peptide directing secretion.

This sequence belongs to the UPF0319 family.

In Glaesserella parasuis serovar 5 (strain SH0165) (Haemophilus parasuis), this protein is UPF0319 protein HAPS_0727.